Here is a 308-residue protein sequence, read N- to C-terminus: D-alanine--D-alanine ligase (308 aa).

The ATP-grasp domain occupies 102-302; it reads KHVAKAAGIP…FGEFLRWMVE (201 aa). 128 to 183 serves as a coordination point for ATP; the sequence is PMKPPYVVKPVREGSSFGVVIVKEDQSHPPQVITSSEWRYGDRVMVERYIAGREFT. Asp252, Glu269, and Asn271 together coordinate Mg(2+).

This sequence belongs to the D-alanine--D-alanine ligase family. The cofactor is Mg(2+). Mn(2+) is required as a cofactor.

The protein localises to the cytoplasm. The catalysed reaction is 2 D-alanine + ATP = D-alanyl-D-alanine + ADP + phosphate + H(+). It participates in cell wall biogenesis; peptidoglycan biosynthesis. Functionally, cell wall formation. This chain is D-alanine--D-alanine ligase, found in Rhizobium meliloti (strain 1021) (Ensifer meliloti).